A 225-amino-acid polypeptide reads, in one-letter code: 3-dehydroquinate dehydratase (225 aa).

3-dehydroquinate is bound by residues S6, E30 to R32, and R62. The Proton donor/acceptor role is filled by H118. The Schiff-base intermediate with substrate role is filled by K143. R186, T205, and Q209 together coordinate 3-dehydroquinate.

The protein belongs to the type-I 3-dehydroquinase family. As to quaternary structure, homodimer.

It carries out the reaction 3-dehydroquinate = 3-dehydroshikimate + H2O. The protein operates within metabolic intermediate biosynthesis; chorismate biosynthesis; chorismate from D-erythrose 4-phosphate and phosphoenolpyruvate: step 3/7. Its function is as follows. Involved in the third step of the chorismate pathway, which leads to the biosynthesis of aromatic amino acids. Catalyzes the cis-dehydration of 3-dehydroquinate (DHQ) and introduces the first double bond of the aromatic ring to yield 3-dehydroshikimate. The sequence is that of 3-dehydroquinate dehydratase from Streptococcus gordonii (strain Challis / ATCC 35105 / BCRC 15272 / CH1 / DL1 / V288).